Here is a 126-residue protein sequence, read N- to C-terminus: Holo-[acyl-carrier-protein] synthase (126 aa).

Positions 9 and 58 each coordinate Mg(2+).

Belongs to the P-Pant transferase superfamily. AcpS family. It depends on Mg(2+) as a cofactor.

It is found in the cytoplasm. The enzyme catalyses apo-[ACP] + CoA = holo-[ACP] + adenosine 3',5'-bisphosphate + H(+). Its function is as follows. Transfers the 4'-phosphopantetheine moiety from coenzyme A to a Ser of acyl-carrier-protein. This is Holo-[acyl-carrier-protein] synthase from Pectobacterium carotovorum subsp. carotovorum (strain PC1).